Consider the following 145-residue polypeptide: HTH-type transcriptional regulator MhqR (145 aa).

Positions 5–137 (SLKLFIVLSR…CTEMLKRVGL (133 aa)) constitute an HTH marR-type domain. Positions 51-74 (LQQIGDKILLASGSITYVVDKLEQ) form a DNA-binding region, H-T-H motif.

In terms of biological role, negatively regulates mhqA, mhqED, mhqNOP, and azoR2 which may contribute to the degradation of aromatic compounds. This Bacillus subtilis (strain 168) protein is HTH-type transcriptional regulator MhqR (mhqR).